We begin with the raw amino-acid sequence, 86 residues long: Toxin ICK-18 (86 aa).

The N-terminal stretch at 1–19 (MKTIFALVFCCAIAVVVLG) is a signal peptide. 4 cysteine pairs are disulfide-bonded: Cys-35/Cys-49, Cys-42/Cys-61, Cys-48/Cys-76, and Cys-79/Cys-86.

This sequence belongs to the neurotoxin 21 family. In terms of tissue distribution, expressed by the venom gland.

The protein resides in the secreted. Its function is as follows. Probable neurotoxin with ion channel impairing activity. This is Toxin ICK-18 from Trittame loki (Brush-footed trapdoor spider).